The sequence spans 247 residues: Protein NipSnap homolog 3B (247 aa).

An N6-succinyllysine mark is found at Lys45, Lys48, Lys57, and Lys166.

Belongs to the NipSnap family.

It localises to the cytoplasm. The protein resides in the cytosol. This is Protein NipSnap homolog 3B (Nipsnap3b) from Mus musculus (Mouse).